The chain runs to 314 residues: Mitochondrial 2-oxoglutarate/malate carrier protein (314 aa).

N-acetylalanine is present on alanine 2. Serine 6 carries the post-translational modification Phosphoserine. 3 Solcar repeats span residues 23 to 108 (VKFL…LFER), 117 to 208 (PGFL…SKQF), and 217 to 306 (DNIL…MNKA). A helical membrane pass occupies residues 24-42 (KFLFGGLAGMGATVFVQPL). Lysine 57 carries the post-translational modification N6-succinyllysine. The chain crosses the membrane as a helical span at residues 83–101 (GLSAGLLRQATYTTTRLGI). Residue tyrosine 102 is modified to Phosphotyrosine. A run of 3 helical transmembrane segments spans residues 119–140 (FLLK…GTPA), 183–202 (GCIP…LASY), and 222–240 (HFCA…SMPV). N6-acetyllysine is present on lysine 256. A helical membrane pass occupies residues 281–300 (GFTPYYARLGPHTVLTFIFL).

The protein belongs to the mitochondrial carrier (TC 2.A.29) family. Interacts with SMIM26. The N-terminus is blocked. As to expression, heart, liver and brain.

The protein resides in the mitochondrion inner membrane. The catalysed reaction is (S)-malate(in) + 2-oxoglutarate(out) = (S)-malate(out) + 2-oxoglutarate(in). It carries out the reaction malonate(in) + 2-oxoglutarate(out) = malonate(out) + 2-oxoglutarate(in). The enzyme catalyses succinate(in) + 2-oxoglutarate(out) = succinate(out) + 2-oxoglutarate(in). It catalyses the reaction maleate(in) + 2-oxoglutarate(out) = maleate(out) + 2-oxoglutarate(in). The catalysed reaction is oxaloacetate(in) + 2-oxoglutarate(out) = oxaloacetate(out) + 2-oxoglutarate(in). In terms of biological role, catalyzes the transport of 2-oxoglutarate (alpha-oxoglutarate) across the inner mitochondrial membrane in an electroneutral exchange for malate. Can also exchange 2-oxoglutarate for other dicarboxylic acids such as malonate, succinate, maleate and oxaloacetate, although with lower affinity. Contributes to several metabolic processes, including the malate-aspartate shuttle, the oxoglutarate/isocitrate shuttle, in gluconeogenesis from lactate, and in nitrogen metabolism. Maintains mitochondrial fusion and fission events, and the organization and morphology of cristae. Involved in the regulation of apoptosis. Helps protect from cytotoxic-induced apoptosis by modulating glutathione levels in mitochondria. The polypeptide is Mitochondrial 2-oxoglutarate/malate carrier protein (SLC25A11) (Bos taurus (Bovine)).